The chain runs to 233 residues: Putative peroxiredoxin (233 aa).

A Thioredoxin domain is found at 41–200; sequence AQIGKEAPEF…TIRIVKAIQF (160 aa). The active-site Cysteine sulfenic acid (-SOH) intermediate is the Cys87.

Belongs to the peroxiredoxin family. AhpC/Prx1 subfamily. Homodimer; disulfide-linked, upon oxidation.

The protein resides in the cell membrane. The enzyme catalyses a hydroperoxide + [thioredoxin]-dithiol = an alcohol + [thioredoxin]-disulfide + H2O. In terms of biological role, thiol-specific peroxidase that catalyzes the reduction of hydrogen peroxide and organic hydroperoxides to water and alcohols, respectively. Plays a role in cell protection against oxidative stress by detoxifying peroxides and as sensor of hydrogen peroxide-mediated signaling events. In Entamoeba histolytica (strain ATCC 30459 / HM-1:IMSS / ABRM), this protein is Putative peroxiredoxin.